A 1478-amino-acid polypeptide reads, in one-letter code: ATP-binding cassette transporter abc2 (1478 aa).

At 1 to 25 (MVLEQDLDPFVGGNWMNSAYKGFTF) the chain is on the vacuolar side. The chain crosses the membrane as a helical span at residues 26–46 (LSATWLAPNIYLLISGCLQYF). Residues 47 to 65 (YEVRKRSHYFHFRRFWTIW) lie on the Cytoplasmic side of the membrane. A helical membrane pass occupies residues 66–85 (LKSLVIMVLLFTHIYDCYKT). Residue asparagine 86 is glycosylated (N-linked (GlcNAc...) asparagine). Over 86-90 (NESVW) the chain is Vacuolar. A helical membrane pass occupies residues 91-104 (NVLSIITYFLALFL). Residues 105 to 116 (HVVEQPTLRIPM) are Cytoplasmic-facing. Residues 117-137 (ASLLMFWLFKFLASALVLLLR) form a helical membrane-spanning segment. Topologically, residues 138-154 (PNYTMFPMLNVVPSITF) are vacuolar. An N-linked (GlcNAc...) asparagine glycan is attached at asparagine 139. Residues 155 to 175 (FCSLVCLLAEIYVPPANRVWY) traverse the membrane as a helical segment. The Cytoplasmic segment spans residues 176–259 (PDDAAELEET…KKSSLYMWGV (84 aa)). Residues 260 to 280 (LFLNHWKLTVVIIVLKLVQDV) form a helical membrane-spanning segment. Positions 268–557 (TVVIIVLKLV…LPIVVSSVLE (290 aa)) constitute an ABC transmembrane type-1 1 domain. At 281–310 (VAFIQPNLIRKIVIFVSSYSSEHPQPPQVG) the chain is on the vacuolar side. Residues 311 to 331 (FSLAIAMFLTNVVQTALLQQY) traverse the membrane as a helical segment. Residues 332 to 387 (FQLGMVLGMRWRSELITAIYRKSLRLSSAARQSRSVGDIVNYMSVDTQKVCDLTMF) are Cytoplasmic-facing. Residues 388–408 (LFVIVSGPFQIVLALTNLYHL) form a helical membrane-spanning segment. The Vacuolar portion of the chain corresponds to 409 to 411 (VGY). A helical transmembrane segment spans residues 412-432 (GALSGAFVTFLLFPCNVVIAS). Over 433–495 (IFKRFQNRQM…MLKKIGIVNT (63 aa)) the chain is Cytoplasmic. The helical transmembrane segment at 496–516 (IGNFTWLFAPILVSAATFGTF) threads the bilayer. Residues 517–539 (IVLYGKTRVLSVDIVFACLSLFN) are Vacuolar-facing. Residues 540 to 560 (LLQFPLTMLPIVVSSVLEASV) traverse the membrane as a helical segment. Residues 561-910 (AISRIYGFLT…VKWKVYWTYF (350 aa)) lie on the Cytoplasmic side of the membrane. Residues 593–821 (LEIKKGTFSW…PDSQLFQLLS (229 aa)) form the ABC transporter 1 domain. Residue 631–638 (GKVGMGKS) coordinates ATP. A disordered region spans residues 828 to 867 (TASSTGADTPLSRSQSVITSSTDVTSSASRSSDTVSNYPK). Residues 829 to 840 (ASSTGADTPLSR) are compositionally biased toward polar residues. Phosphoserine is present on residues serine 839, serine 843, and serine 863. Low complexity predominate over residues 841 to 863 (SQSVITSSTDVTSSASRSSDTVS). Residues 911–931 (KACSLFLIFLYFLFIIGGIGM) traverse the membrane as a helical segment. Residues 918 to 1202 (IFLYFLFIIG…VVRQSVDVET (285 aa)) enclose the ABC transmembrane type-1 2 domain. Residues 932–968 (NVGTNVWLKHWSEVNTQLGYNPKPYFYLGIYTLFGLL) are Vacuolar-facing. Residues 969-990 (SCALISLSSLTITVFCAIKSCR) traverse the membrane as a helical segment. Residues 991-1033 (YLHDSMVKAVLRAPMSFFETTPTGRILNRFSSDVYRVDEVISR) lie on the Cytoplasmic side of the membrane. A helical membrane pass occupies residues 1034-1054 (VFMFFFRNLFQIVFVLAVICY). Position 1055 (serine 1055) is a topological domain, vacuolar. A helical transmembrane segment spans residues 1056–1076 (SPMFMILIVPLFFLYRYNQVY). The Cytoplasmic segment spans residues 1077–1147 (YTQTSRELKR…SSNRWQAIRV (71 aa)). A helical transmembrane segment spans residues 1148 to 1168 (EAIGALVVFSSAFFGVLSAVR). Topologically, residues 1169-1172 (GNPN) are vacuolar. A helical transmembrane segment spans residues 1173–1193 (SGLVGLSLSYAVQITQSLTFV). Residues 1194 to 1478 (VRQSVDVETN…YSLAKESGLI (285 aa)) are Cytoplasmic-facing. In terms of domain architecture, ABC transporter 2 spans 1239–1473 (IKFDHYSVRY…KASLFYSLAK (235 aa)). 1273-1280 (GRTGAGKS) contributes to the ATP binding site.

The protein belongs to the ABC transporter superfamily. ABCC family. Conjugate transporter (TC 3.A.1.208) subfamily.

It is found in the vacuole membrane. Involved in vacuolar sequestration of glutathione S-conjugates. Together with abc4, required for accumulation of a red pigment (ade pigment) in the vacuole of a mutant affected in the adenine biosynthetic pathway. The chain is ATP-binding cassette transporter abc2 (abc2) from Schizosaccharomyces pombe (strain 972 / ATCC 24843) (Fission yeast).